Consider the following 100-residue polypeptide: MVPTSYYVLLSAILFTIGVLGVLLRRNAIVVFMAVELMLNAANLALVAFARERLGVEAQVIVFFVITVAAAEVAVGLALLVSIFRTKRTADVDEVSTLKG.

Helical transmembrane passes span 4–24, 29–49, and 60–80; these read TSYYVLLSAILFTIGVLGVLL, IVVFMAVELMLNAANLALVAF, and VIVFFVITVAAAEVAVGLALL.

The protein belongs to the complex I subunit 4L family. As to quaternary structure, NDH-1 is composed of 14 different subunits. Subunits NuoA, H, J, K, L, M, N constitute the membrane sector of the complex.

The protein resides in the cell membrane. It carries out the reaction a quinone + NADH + 5 H(+)(in) = a quinol + NAD(+) + 4 H(+)(out). In terms of biological role, NDH-1 shuttles electrons from NADH, via FMN and iron-sulfur (Fe-S) centers, to quinones in the respiratory chain. The immediate electron acceptor for the enzyme in this species is believed to be ubiquinone. Couples the redox reaction to proton translocation (for every two electrons transferred, four hydrogen ions are translocated across the cytoplasmic membrane), and thus conserves the redox energy in a proton gradient. In Chloroflexus aurantiacus (strain ATCC 29366 / DSM 635 / J-10-fl), this protein is NADH-quinone oxidoreductase subunit K.